The sequence spans 214 residues: Calcineurin B homologous protein 3 (214 aa).

Glycine 2 carries N-myristoyl glycine lipidation. The EF-hand domain maps to 110–145 (CRKDKLRFLFNMYDTDNDSKITLEEYRKVVEELLSG). Positions 123, 125, 127, 129, and 134 each coordinate Ca(2+).

The protein belongs to the calcineurin regulatory subunit family. CHP subfamily. As to quaternary structure, monomer. Homodimer.

The protein resides in the nucleus. Its subcellular location is the cytoplasm. The protein localises to the membrane. It localises to the cell membrane. It is found in the cell projection. The protein resides in the lamellipodium. Its subcellular location is the ruffle membrane. Functions as an integral cofactor in cell pH regulation by controlling plasma membrane-type Na(+)/H(+) exchange activity. Promotes the induction of hematopoietic stem cell differentiation toward megakaryocytic lineage. Essential for the coupling of ERK cascade activation with the expression of ETS family genes in megakaryocytic differentiation. Also involved in granulocytic differentiation in a ERK-dependent manner. Inhibits the phosphatase activity of calcineurin. This is Calcineurin B homologous protein 3 (tesc) from Xenopus tropicalis (Western clawed frog).